The sequence spans 447 residues: Retinoic acid receptor alpha (447 aa).

A modulating region spans residues 1-79 (MAGKGNPVPG…PPPPPRVYKP (79 aa)). Residues 47-61 (TPSPATIETQSTSSE) show a composition bias toward polar residues. The disordered stretch occupies residues 47-72 (TPSPATIETQSTSSEEIVPSPPSPPP). NR C4-type zinc fingers lie at residues 80–100 (CFVC…CEGC) and 116–140 (CHRE…LQKC). Positions 80–145 (CFVCQDKSSG…RLQKCLEVGM (66 aa)) form a DNA-binding region, nuclear receptor. The segment at 146–174 (SKESVRNDRNKKKKDEKKPECIENYVLSP) is hinge. Residues 175–409 (DTEQMINRVR…PLIQEMLENS (235 aa)) enclose the NR LBD domain. The 9aaTAD motif lies at 400–408 (PLIQEMLEN). Residues 407–447 (ENSEGLESGATGSRPSGAPPGSCSPSLSPSSAQSSPPTQSP) form a disordered region. Positions 414–447 (SGATGSRPSGAPPGSCSPSLSPSSAQSSPPTQSP) are enriched in low complexity.

Belongs to the nuclear hormone receptor family. NR1 subfamily. Heterodimer; with an rxr molecule. Binds DNA preferentially as a rar/rxr heterodimer.

It localises to the nucleus. Receptor for retinoic acid. Retinoic acid receptors bind as heterodimers to their target response elements in response to their ligands, all-trans or 9-cis retinoic acid, and regulate gene expression in various biological processes. The rar/rxr heterodimers bind to the retinoic acid response elements (RARE) composed of tandem 5'-AGGTCA-3' sites known as DR1-DR5. In Takifugu rubripes (Japanese pufferfish), this protein is Retinoic acid receptor alpha (rara).